The sequence spans 282 residues: Undecaprenyl-diphosphatase (282 aa).

The next 8 membrane-spanning stretches (helical) occupy residues 1–21 (MTLIQAILLGIIQGLTEFLPI), 39–59 (PGAAFTAIIQIGTLGAVMLYF), 85–105 (AKMGWMIAAGTLPIVAFGLLF), 115–135 (SLYWISGALIILALVLSLAEW), 153–173 (IGWKEALLIGLAQAIALIPGS), 193–213 (AARFSFLLSLPAVFAAGAFEL), 229–249 (NLAVATITSGIVGYLSIAFLL), and 259–279 (IFIAYRLAAGAGLLLLLGGGT).

Belongs to the UppP family.

It localises to the cell inner membrane. It carries out the reaction di-trans,octa-cis-undecaprenyl diphosphate + H2O = di-trans,octa-cis-undecaprenyl phosphate + phosphate + H(+). Its function is as follows. Catalyzes the dephosphorylation of undecaprenyl diphosphate (UPP). Confers resistance to bacitracin. This Chlorobium luteolum (strain DSM 273 / BCRC 81028 / 2530) (Pelodictyon luteolum) protein is Undecaprenyl-diphosphatase.